A 341-amino-acid polypeptide reads, in one-letter code: UDP-N-acetylenolpyruvoylglucosamine reductase (341 aa).

Positions 12–182 (LSAYAKRLDI…ISVGLLLKKN (171 aa)) constitute an FAD-binding PCMH-type domain. Residue arginine 158 is part of the active site. Catalysis depends on serine 228, which acts as the Proton donor. Glutamate 324 is a catalytic residue.

It belongs to the MurB family. The cofactor is FAD.

The protein localises to the cytoplasm. It carries out the reaction UDP-N-acetyl-alpha-D-muramate + NADP(+) = UDP-N-acetyl-3-O-(1-carboxyvinyl)-alpha-D-glucosamine + NADPH + H(+). Its pathway is cell wall biogenesis; peptidoglycan biosynthesis. Cell wall formation. The sequence is that of UDP-N-acetylenolpyruvoylglucosamine reductase from Photorhabdus laumondii subsp. laumondii (strain DSM 15139 / CIP 105565 / TT01) (Photorhabdus luminescens subsp. laumondii).